The sequence spans 642 residues: DNA gyrase subunit B (642 aa).

One can recognise a Toprim domain in the interval Cys422 to Pro536. Residues Glu428, Asp501, and Asp503 each coordinate Mg(2+).

This sequence belongs to the type II topoisomerase family. Heterotetramer, composed of two GyrA and two GyrB chains. Within the heterotetramer, GyrA contains the active site tyrosine that forms a covalent intermediate with the DNA, while GyrB contributes the cofactor binding sites and catalyzes ATP hydrolysis. The cofactor is Mg(2+). It depends on Mn(2+) as a cofactor. Ca(2+) serves as cofactor.

The protein localises to the cytoplasm. It catalyses the reaction ATP-dependent breakage, passage and rejoining of double-stranded DNA.. Its activity is regulated as follows. Pyrrolopyrimidines inhibit both GyrB and its paralog in topoisomerase IV (parE). In terms of biological role, DNA gyrase negatively supercoils closed circular double-stranded DNA in an ATP-dependent manner and also catalyzes the interconversion of other topological isomers of double-stranded DNA rings, including catenanes and knotted rings. In Enterococcus faecalis (strain ATCC 700802 / V583), this protein is DNA gyrase subunit B.